Here is a 464-residue protein sequence, read N- to C-terminus: Hydrogen cyanide synthase subunit HcnB (464 aa).

In terms of assembly, heterotrimer of HcnA, HcnB and HcnC.

The protein localises to the cell membrane. The catalysed reaction is glycine + 2 A = hydrogen cyanide + 2 AH2 + CO2. Oxygen is necessary for cyanogenesis. Activated by succinate, glycine methyl ester, glucose and D,L-methionine in addition to glycine. Phenazine methosulfate, methylene blue, 2,6-dichlorophenolindophenol (DCIP) and ferricyanide can replace oxygen for the reaction. Inhibited by pyrrolnitrin and acriflavine at 1 mM concentration. Its function is as follows. A three-component membrane-bound flavoenzyme that catalyzes the formation of hydrogen cyanide, a secondary metabolite, by transfer of electrons to a cyanide-resistant branch of the aerobic respiratory chain. The sequence is that of Hydrogen cyanide synthase subunit HcnB from Pseudomonas aeruginosa (strain ATCC 15692 / DSM 22644 / CIP 104116 / JCM 14847 / LMG 12228 / 1C / PRS 101 / PAO1).